The chain runs to 78 residues: Pigment-dispersing hormone 1 peptides (78 aa).

The signal sequence occupies residues 1–22 (MRSSVIVAVLVVVALAALLTQG). The residue at position 75 (Ala75) is an Alanine amide.

Belongs to the arthropod PDH family. Eyestalk sinus gland.

It localises to the secreted. In terms of biological role, the pigment-dispersing hormone causes the migration of the distal retinal pigment into the proximal end of the pigment chromatophore cells and thus decreases the amount of light entering the retinulas. May also function as a neurotransmitter and/or neuromodulator. This is Pigment-dispersing hormone 1 peptides (PDH1) from Callinectes sapidus (Blue crab).